We begin with the raw amino-acid sequence, 103 residues long: Large ribosomal subunit protein bL21 (103 aa).

The protein belongs to the bacterial ribosomal protein bL21 family. As to quaternary structure, part of the 50S ribosomal subunit. Contacts protein L20.

Functionally, this protein binds to 23S rRNA in the presence of protein L20. This chain is Large ribosomal subunit protein bL21, found in Leptothrix cholodnii (strain ATCC 51168 / LMG 8142 / SP-6) (Leptothrix discophora (strain SP-6)).